Here is a 181-residue protein sequence, read N- to C-terminus: ATP synthase subunit delta (181 aa).

The protein belongs to the ATPase delta chain family. In terms of assembly, F-type ATPases have 2 components, F(1) - the catalytic core - and F(0) - the membrane proton channel. F(1) has five subunits: alpha(3), beta(3), gamma(1), delta(1), epsilon(1). CF(0) has four main subunits: a(1), b(1), b'(1) and c(10-14). The alpha and beta chains form an alternating ring which encloses part of the gamma chain. F(1) is attached to F(0) by a central stalk formed by the gamma and epsilon chains, while a peripheral stalk is formed by the delta, b and b' chains.

It is found in the cellular thylakoid membrane. F(1)F(0) ATP synthase produces ATP from ADP in the presence of a proton or sodium gradient. F-type ATPases consist of two structural domains, F(1) containing the extramembraneous catalytic core and F(0) containing the membrane proton channel, linked together by a central stalk and a peripheral stalk. During catalysis, ATP synthesis in the catalytic domain of F(1) is coupled via a rotary mechanism of the central stalk subunits to proton translocation. Its function is as follows. This protein is part of the stalk that links CF(0) to CF(1). It either transmits conformational changes from CF(0) to CF(1) or is implicated in proton conduction. The polypeptide is ATP synthase subunit delta (Synechococcus sp. (strain RCC307)).